A 520-amino-acid polypeptide reads, in one-letter code: Apolipoprotein N-acyltransferase (520 aa).

Transmembrane regions (helical) follow at residues 12–32 (IFTY…FSPF), 33–53 (DYWG…KTAE), 58–78 (LWSA…WVHV), 93–113 (VLVL…AYLI), 122–142 (AMFP…FTGF), 168–188 (VTFF…VLLI), and 193–213 (WNVV…SAYS). The region spanning 232–479 (AQGNIEQNLK…ETTLTHKVAA (248 aa)) is the CN hydrolase domain. Residue E272 is the Proton acceptor of the active site. Residue K338 is part of the active site. C390 functions as the Nucleophile in the catalytic mechanism. Residues 484 to 504 (TPYAVFGNTAIYGLSLLLLLM) traverse the membrane as a helical segment.

It belongs to the CN hydrolase family. Apolipoprotein N-acyltransferase subfamily.

It localises to the cell inner membrane. It catalyses the reaction N-terminal S-1,2-diacyl-sn-glyceryl-L-cysteinyl-[lipoprotein] + a glycerophospholipid = N-acyl-S-1,2-diacyl-sn-glyceryl-L-cysteinyl-[lipoprotein] + a 2-acyl-sn-glycero-3-phospholipid + H(+). The protein operates within protein modification; lipoprotein biosynthesis (N-acyl transfer). Its function is as follows. Catalyzes the phospholipid dependent N-acylation of the N-terminal cysteine of apolipoprotein, the last step in lipoprotein maturation. The polypeptide is Apolipoprotein N-acyltransferase (Pasteurella multocida (strain Pm70)).